The sequence spans 348 residues: 3-methyl-2-oxobutanoate dehydrogenase subunit beta (348 aa).

Residues E51, 80–82 (LAE), Q104, and 108–111 (FSYP) contribute to the thiamine diphosphate site. Substrate-binding positions include 105–108 (FDGF) and H151. H151 serves as the catalytic Proton acceptor.

Heteromer of E1 alpha (BkdA) and beta (BkdB) subunits. Part of the BCKADH complex, consisting of multiple copies of BkdA/BkdB (E1), BkdC (E2) and Lpd (E3). It depends on thiamine diphosphate as a cofactor.

It carries out the reaction N(6)-[(R)-lipoyl]-L-lysyl-[protein] + 3-methyl-2-oxobutanoate + H(+) = N(6)-[(R)-S(8)-2-methylpropanoyldihydrolipoyl]-L-lysyl-[protein] + CO2. Functionally, component of the branched-chain alpha-ketoacid dehydrogenase (BCKADH) complex, that catalyzes the overall conversion of branched-chain alpha-ketoacids to acyl-CoA and CO(2). In Mycobacterium tuberculosis (strain CDC 1551 / Oshkosh), this protein is 3-methyl-2-oxobutanoate dehydrogenase subunit beta (bkdB).